The primary structure comprises 213 residues: Protein-L-isoaspartate O-methyltransferase (213 aa).

Residue serine 58 is part of the active site.

Belongs to the methyltransferase superfamily. L-isoaspartyl/D-aspartyl protein methyltransferase family.

The protein resides in the cytoplasm. It carries out the reaction [protein]-L-isoaspartate + S-adenosyl-L-methionine = [protein]-L-isoaspartate alpha-methyl ester + S-adenosyl-L-homocysteine. In terms of biological role, catalyzes the methyl esterification of L-isoaspartyl residues in peptides and proteins that result from spontaneous decomposition of normal L-aspartyl and L-asparaginyl residues. It plays a role in the repair and/or degradation of damaged proteins. The polypeptide is Protein-L-isoaspartate O-methyltransferase (Chlorobaculum tepidum (strain ATCC 49652 / DSM 12025 / NBRC 103806 / TLS) (Chlorobium tepidum)).